A 129-amino-acid polypeptide reads, in one-letter code: MPTSMPNDPCPCGRPADYARCCGPYHAGAAAPDAETLMRARYSAHVRRDAAYLLASWHPSTRPGELSLDEGGRTTWLGLTVQRTLETGPETAEVVFLARYRIGGGSAVRMTEHSRFVRDAGRWYYLDAR.

This sequence belongs to the UPF0225 family.

In Xanthomonas oryzae pv. oryzae (strain MAFF 311018), this protein is UPF0225 protein XOO0258.